Consider the following 1498-residue polypeptide: Mitogen-activated protein kinase kinase kinase nsy-1 (1498 aa).

Disordered stretches follow at residues 1–35 (MSQN…PTAY) and 190–209 (LQSY…FART). Residues 22–33 (LPLPPRGAPPPT) show a composition bias toward pro residues. The region spanning 664-925 (SNERVVLGKG…AKDLLQDPFI (262 aa)) is the Protein kinase domain. Residues 670–678 (LGKGTYGTV) and K693 each bind ATP. D790 serves as the catalytic Proton acceptor. The tract at residues 1022–1050 (IDHARNRTFSSSSPVPDGQSSAGTNMSHP) is disordered. Positions 1031-1042 (SSSSPVPDGQSS) are enriched in low complexity. Residues 1276 to 1314 (SREERVREDRKELRTLQEENEILIERLLQVERELNAQLK) adopt a coiled-coil conformation. The interval 1461–1498 (QPVFLSPMRSRDDSLDDYHSSSADDMYTGAAAETSSGN) is disordered. Over residues 1469-1479 (RSRDDSLDDYH) the composition is skewed to basic and acidic residues.

It belongs to the protein kinase superfamily. STE Ser/Thr protein kinase family. MAP kinase kinase kinase subfamily. As to quaternary structure, interacts with unc-43. Interacts with sek-1. The cofactor is Mg(2+). May be phosphorylated upon pathogenic bacterial infection. May be regulated by proteasomal degradation mediated by the E3-ubiquitin ligase rle-1. Expressed in intestine, hypodermis, rectal gland cell and neurons including sensory AWC neurons.

It is found in the cell projection. Its subcellular location is the axon. The protein localises to the perikaryon. The enzyme catalyses L-seryl-[protein] + ATP = O-phospho-L-seryl-[protein] + ADP + H(+). It catalyses the reaction L-threonyl-[protein] + ATP = O-phospho-L-threonyl-[protein] + ADP + H(+). Functionally, serine/threonine-protein kinase which, by phosphorylating and activating sek-1, plays an important role in the activation of the p38 pathway also composed of the downstream effectors sek-1 and pmk-1. Downstream of CaMKII unc-43 and adapter protein tir-1, plays a role in determining asymmetric cell fates in olfactory AWC neurons during neuronal development. Activation results in the repression of odorant receptor str-2 expression in one of the 2 AWC neurons. Involved in resistance to pathogenic Gram-positive and Gram-negative bacterial and fungal infection. Involved in resistance to the nematotoxic C.cinerea galectin Cgl2. Probably by activating the sek1/pmk-1/skn-1 pathway, involved in the up-regulation of gcs-1 and glutathione-S-transferase gst-4 expression upon bacterial infection. Probably downstream of tir-1 and nipi-3, required for the expression of antimicrobial peptide nlp-29 in the epidermis in response to fungal infection or physical injury. Plays a role in resistance to several environmental stresses including oxidative, protein misfolding (ER) and osmotic stresses, and DNA-damaging reagents. Plays a role in the stabilization of transcription factor rnt-1 in the intestine during oxidative stress. Involved in germline apoptosis induced by heavy metals, such as Cu(2+). In addition, plays a role in the up-regulation of gcs-1 upon arsenite treatment, most likely through activation of pmk-1, to confer protection against toxicity induced by heavy metals. Plays a role downstream of tir-1 in regulating susceptibility to anoxia. Involved in egg laying. The sequence is that of Mitogen-activated protein kinase kinase kinase nsy-1 from Caenorhabditis elegans.